Here is a 391-residue protein sequence, read N- to C-terminus: U-box domain-containing protein 57 (391 aa).

Positions 1 to 178 (MVKNSYVLFA…DLTERLLQVE (178 aa)) constitute an MIF4G domain. A U-box domain is found at 322-391 (QPPPSFICPI…LRSAIEELGR (70 aa)).

It carries out the reaction S-ubiquitinyl-[E2 ubiquitin-conjugating enzyme]-L-cysteine + [acceptor protein]-L-lysine = [E2 ubiquitin-conjugating enzyme]-L-cysteine + N(6)-ubiquitinyl-[acceptor protein]-L-lysine.. The protein operates within protein modification; protein ubiquitination. Its function is as follows. Functions as an E3 ubiquitin ligase. The protein is U-box domain-containing protein 57 (PUB57) of Arabidopsis thaliana (Mouse-ear cress).